The primary structure comprises 107 residues: Putative double-stranded DNA mimic protein HS_0995 (107 aa).

This sequence belongs to the putative dsDNA mimic protein family.

May act as a double-stranded DNA (dsDNA) mimic. Probably regulates the activity of a dsDNA-binding protein. The sequence is that of Putative double-stranded DNA mimic protein HS_0995 from Histophilus somni (strain 129Pt) (Haemophilus somnus).